We begin with the raw amino-acid sequence, 433 residues long: MNRSEALFEQAKKTIPGGVNSPVRAFNGVGGSPLFIEKADGAYIFDADGNKYIDYVGSWGPMILGHNHPKIRQAVLDAVENGLSFGAPTELEVKMAEKVIAMVPSIEQVRMVSSGTEATMSAIRLARGYTNRDKILKFEGCYHGHADCLLVKAGSGALTLGQPSSPGIPEDFAKHTLTATYNDLASVRSLFELHPDAISCIILEPVAGNMNCIPPIPGFLQGLRGLCDEFGALLIIDEVMTGFRVAMGGAQAHYGVVPDLTTLGKVIGGGMPVGAFGGKKAIMQYIAPTGPVYQAGTLSGNPIAMSAGLAQMEALCEPGLYPALAEKTQRIALGMKAAADKHSIPLSITYVGGMFGFFFTTDSAPMTSFAQVTQCNMEHFRYFYHAMLAQGVYLAPSAYEAGFLSMAHGEDELAMTLKAVDSVFAEMKVAFKL.

At lysine 265 the chain carries N6-(pyridoxal phosphate)lysine.

Belongs to the class-III pyridoxal-phosphate-dependent aminotransferase family. HemL subfamily. As to quaternary structure, homodimer. It depends on pyridoxal 5'-phosphate as a cofactor.

The protein localises to the cytoplasm. The enzyme catalyses (S)-4-amino-5-oxopentanoate = 5-aminolevulinate. The protein operates within porphyrin-containing compound metabolism; protoporphyrin-IX biosynthesis; 5-aminolevulinate from L-glutamyl-tRNA(Glu): step 2/2. This Shewanella denitrificans (strain OS217 / ATCC BAA-1090 / DSM 15013) protein is Glutamate-1-semialdehyde 2,1-aminomutase.